We begin with the raw amino-acid sequence, 956 residues long: Plasma membrane ATPase 1 (956 aa).

Topologically, residues 1-65 (MAEKPEVLDA…EKKESKFLKF (65 aa)) are cytoplasmic. The helical transmembrane segment at 66 to 85 (LGFMWNPLSWVMEAAAIMAI) threads the bilayer. The Extracellular segment spans residues 86 to 97 (ALANGGGKPPDW). A helical membrane pass occupies residues 98–118 (QDFVGIITLLIINSTISFIEE). Residues 119-247 (NNAGNAAAAL…GHFQKVLTAI (129 aa)) are Cytoplasmic-facing. Residues 248–268 (GNFCICSIAVGMIIEIIVMYP) traverse the membrane as a helical segment. The Extracellular segment spans residues 269–277 (IQHRKYRPG). A helical membrane pass occupies residues 278–295 (IDNLLVLLIGGIPIAMPT). The Cytoplasmic portion of the chain corresponds to 296 to 646 (VLSVTMAIGS…LTSRAIFQRM (351 aa)). Aspartate 333 acts as the 4-aspartylphosphate intermediate in catalysis. The Mg(2+) site is built by aspartate 592 and aspartate 596. The chain crosses the membrane as a helical span at residues 647-666 (KNYTIYAVSITIRIVLGFML). Residues 667–674 (LALIWKFD) are Extracellular-facing. The chain crosses the membrane as a helical span at residues 675 to 697 (FPPFMVLIIAILNDGTIMTISKD). The Cytoplasmic portion of the chain corresponds to 698-713 (RVKPSPLPDSWKLAEI). The helical transmembrane segment at 714-734 (FTTGVVLGGYLAMMTVIFFWA) threads the bilayer. Topologically, residues 735 to 759 (AYKTNFFPRIFGVSTLEKTATDDFR) are extracellular. The chain crosses the membrane as a helical span at residues 760–780 (KLASAIYLQVSTISQALIFVT). Residues 781-792 (RSRSWSFVERPG) lie on the Cytoplasmic side of the membrane. Residues 793-813 (LLLVFAFFVAQLVATLIAVYA) form a helical membrane-spanning segment. The Extracellular segment spans residues 814–821 (NWSFAAIE). Residues 822–842 (GIGWGWAGVIWLYNIVTYIPL) form a helical membrane-spanning segment. At 843–956 (DLIKFLIRYA…IETIQQSYTV (114 aa)) the chain is on the cytoplasmic side.

Belongs to the cation transport ATPase (P-type) (TC 3.A.3) family. Type IIIA subfamily. Possibly exists as a homodimer or a homotrimer.

The protein resides in the cell membrane. The catalysed reaction is ATP + H2O + H(+)(in) = ADP + phosphate + 2 H(+)(out). The plasma membrane ATPase of plants and fungi is a hydrogen ion pump. The proton gradient it generates drives the active transport of nutrients by H(+)-symport. The resulting external acidification and/or internal alkinization may mediate growth responses. This chain is Plasma membrane ATPase 1 (LHA1), found in Solanum lycopersicum (Tomato).